We begin with the raw amino-acid sequence, 373 residues long: Cobalt-precorrin-5B C(1)-methyltransferase (373 aa).

This sequence belongs to the CbiD family.

The enzyme catalyses Co-precorrin-5B + S-adenosyl-L-methionine = Co-precorrin-6A + S-adenosyl-L-homocysteine. Its pathway is cofactor biosynthesis; adenosylcobalamin biosynthesis; cob(II)yrinate a,c-diamide from sirohydrochlorin (anaerobic route): step 6/10. Functionally, catalyzes the methylation of C-1 in cobalt-precorrin-5B to form cobalt-precorrin-6A. The chain is Cobalt-precorrin-5B C(1)-methyltransferase from Listeria monocytogenes serovar 1/2a (strain ATCC BAA-679 / EGD-e).